The sequence spans 251 residues: tRNA-cytidine(32) 2-sulfurtransferase 1 (251 aa).

Positions 33-38 match the PP-loop motif motif; sequence SGGKDS. Positions 108, 111, and 199 each coordinate [4Fe-4S] cluster.

It belongs to the TtcA family. As to quaternary structure, homodimer. Mg(2+) is required as a cofactor. [4Fe-4S] cluster serves as cofactor.

The protein resides in the cytoplasm. The catalysed reaction is cytidine(32) in tRNA + S-sulfanyl-L-cysteinyl-[cysteine desulfurase] + AH2 + ATP = 2-thiocytidine(32) in tRNA + L-cysteinyl-[cysteine desulfurase] + A + AMP + diphosphate + H(+). It functions in the pathway tRNA modification. Its function is as follows. Catalyzes the ATP-dependent 2-thiolation of cytidine in position 32 of tRNA, to form 2-thiocytidine (s(2)C32). The sulfur atoms are provided by the cysteine/cysteine desulfurase (IscS) system. The protein is tRNA-cytidine(32) 2-sulfurtransferase 1 of Francisella tularensis subsp. holarctica (strain FTNF002-00 / FTA).